Reading from the N-terminus, the 417-residue chain is Queuine tRNA-ribosyltransferase accessory subunit 2 (417 aa).

Zn(2+)-binding residues include C324, C326, C329, and H355.

The protein belongs to the queuine tRNA-ribosyltransferase family. QTRT2 subfamily. Heterodimer of a catalytic subunit and an accessory subunit. It depends on Zn(2+) as a cofactor.

It is found in the cytoplasm. Functionally, non-catalytic subunit of the queuine tRNA-ribosyltransferase (TGT) that catalyzes the base-exchange of a guanine (G) residue with queuine (Q) at position 34 (anticodon wobble position) in tRNAs with GU(N) anticodons (tRNA-Asp, -Asn, -His and -Tyr), resulting in the hypermodified nucleoside queuosine (7-(((4,5-cis-dihydroxy-2-cyclopenten-1-yl)amino)methyl)-7-deazaguanosine). The protein is Queuine tRNA-ribosyltransferase accessory subunit 2 of Drosophila virilis (Fruit fly).